The sequence spans 496 residues: Matrilin-1 (496 aa).

The signal sequence occupies residues 1–22 (MRVLSGTSLMLCSLLLLLQALC). The VWFA 1 domain maps to 23–222 (SPGLAPQSRG…SRKFQEAFCV (200 aa)). An N-linked (GlcNAc...) asparagine glycan is attached at asparagine 76. The 41-residue stretch at 223 to 263 (VSDLCATGDHDCEQVCISSPGSYTCACHEGFTLNSDGKTCN) folds into the EGF-like domain. Intrachain disulfides connect cysteine 227-cysteine 238, cysteine 234-cysteine 247, and cysteine 249-cysteine 262. Residues 264–453 (VCSGGGGSSA…GKKLQKKICV (190 aa)) form the VWFA 2 domain. Asparagine 344 carries N-linked (GalNAc...) asparagine glycosylation. The stretch at 467 to 495 (QAKVEGLLQALTRKLEAVSKRLAILENTV) forms a coiled coil.

As to quaternary structure, homotrimer. Part of a complex composed of MATN1 (via VWFA1 domain), type 2 collagens and type 6 collagens. Forms a complex (via covalent bonds) with ACAN; the interaction increases in abundance with increasing age of the organism via an increase in occupancy of MATN1 binding sites. Interacts with COMP. Post-translationally, N-glycosylated; reduces binding affinity for type 2 collagens.

Its subcellular location is the secreted. The protein localises to the extracellular space. The protein resides in the extracellular matrix. In terms of biological role, a major component of the extracellular matrix of non-articular cartilage. Binds to type 2 collagens and forms long concatenated protein networks as part of the extracellular matrix. Required for the network-like organization and bundling of collagen fibrils surrounding chondrocytes in the zones of maturation and hypertrophy. Required for mechanotransduction and adaption to mechanical loading in cartilage chondrocytes, resulting in an increase in expression of the extracellular matrix components ACAN and COL2A1. Acts as a moderator of angiogenesis in response to injury. This Homo sapiens (Human) protein is Matrilin-1.